We begin with the raw amino-acid sequence, 101 residues long: Phosphoribosyl-AMP cyclohydrolase (101 aa).

Residue aspartate 71 participates in Mg(2+) binding. Residue cysteine 72 participates in Zn(2+) binding. Mg(2+)-binding residues include aspartate 73 and aspartate 75. Residues cysteine 88 and cysteine 95 each coordinate Zn(2+).

This sequence belongs to the PRA-CH family. In terms of assembly, homodimer. It depends on Mg(2+) as a cofactor. Requires Zn(2+) as cofactor.

It is found in the cytoplasm. The enzyme catalyses 1-(5-phospho-beta-D-ribosyl)-5'-AMP + H2O = 1-(5-phospho-beta-D-ribosyl)-5-[(5-phospho-beta-D-ribosylamino)methylideneamino]imidazole-4-carboxamide. The protein operates within amino-acid biosynthesis; L-histidine biosynthesis; L-histidine from 5-phospho-alpha-D-ribose 1-diphosphate: step 3/9. Functionally, catalyzes the hydrolysis of the adenine ring of phosphoribosyl-AMP. This Bacillus cereus (strain G9842) protein is Phosphoribosyl-AMP cyclohydrolase.